The primary structure comprises 380 residues: NF-kappa-B inhibitor-like protein 1 (380 aa).

The disordered stretch occupies residues 1–34 (MSNPSPQVPEEEASTSVCRPKSSMASTSRRQRRE). ANK repeat units follow at residues 64–93 (GQPP…DPAH) and 97–133 (HGDT…IKNK). Disordered regions lie at residues 131–166 (KNKD…EWRQ) and 185–293 (GDAS…RGSL). S150 carries the phosphoserine modification. A compositionally biased stretch (basic and acidic residues) spans 237-286 (QQEEEQRLFRERARAKEEELRESRARRAQEALGDREPKPTRAGPREEHPR).

In terms of assembly, interacts with CACTIN (via N-terminal domain); the interaction occurs in a pro-inflammatory-independent manner.

Its subcellular location is the nucleus. Functionally, involved in the regulation of innate immune response. Acts as negative regulator of Toll-like receptor and interferon-regulatory factor (IRF) signaling pathways. Contributes to the negative regulation of transcriptional activation of NF-kappa-B target genes in response to endogenous pro-inflammatory stimuli. In Pan troglodytes (Chimpanzee), this protein is NF-kappa-B inhibitor-like protein 1 (NFKBIL1).